The primary structure comprises 315 residues: DNA-directed RNA polymerase subunit alpha (315 aa).

Residues 1–228 (MLEIEKPKIE…EHFKLFMTLT (228 aa)) form an alpha N-terminal domain (alpha-NTD) region. The segment at 245–315 (KEKVLEMTIE…LGLGLKKSDE (71 aa)) is alpha C-terminal domain (alpha-CTD).

It belongs to the RNA polymerase alpha chain family. Homodimer. The RNAP catalytic core consists of 2 alpha, 1 beta, 1 beta' and 1 omega subunit. When a sigma factor is associated with the core the holoenzyme is formed, which can initiate transcription.

It catalyses the reaction RNA(n) + a ribonucleoside 5'-triphosphate = RNA(n+1) + diphosphate. Functionally, DNA-dependent RNA polymerase catalyzes the transcription of DNA into RNA using the four ribonucleoside triphosphates as substrates. This chain is DNA-directed RNA polymerase subunit alpha, found in Clostridium novyi (strain NT).